The sequence spans 147 residues: MKVLLIKDVKALGKAGEIKEVKDGYGQNFLIAKGFAKAATNEVLRKYESDKKKEAENLRFEIANLEKLKEELSKITLEISKPVGANGSLFGGVTKDEIAHALKEQSHIEIDKKSLECDTLKSLGIHEVSVKLGHAIHAKFNISIKAE.

It belongs to the bacterial ribosomal protein bL9 family.

In terms of biological role, binds to the 23S rRNA. The chain is Large ribosomal subunit protein bL9 from Campylobacter jejuni subsp. doylei (strain ATCC BAA-1458 / RM4099 / 269.97).